A 1196-amino-acid polypeptide reads, in one-letter code: Homeodomain-interacting protein kinase 2 (1196 aa).

Ser-16 is modified (phosphoserine). Residue Lys-32 forms a Glycyl lysine isopeptide (Lys-Gly) (interchain with G-Cter in SUMO); alternate linkage. Residue Lys-32 forms a Glycyl lysine isopeptide (Lys-Gly) (interchain with G-Cter in SUMO2); alternate linkage. Residues 50-69 form a disordered region; sequence VYSQSKNIPPSQPASTTVST. Positions 97 to 230 are transcriptional corepression; the sequence is SASSTSVTGQ…TNEIVAIKIL (134 aa). Ser-118 and Ser-135 each carry phosphoserine. Thr-141 carries the post-translational modification Phosphothreonine. Residues 189–520 form an interaction with DAXX region; sequence HEVLCSMTNT…DADKRVTPIE (332 aa). The Protein kinase domain maps to 199-527; it reads YEVLEFLGRG…PIETLNHPFV (329 aa). Residues 205–213 and Lys-228 contribute to the ATP site; that span reads LGRGTFGQV. Thr-252 and Thr-273 each carry phosphothreonine. The active-site Proton acceptor is the Asp-324. Phosphotyrosine; by autocatalysis is present on Tyr-361. Position 441 is a phosphoserine (Ser-441). A phosphothreonine mark is found at Thr-482, Thr-517, and Thr-566. The tract at residues 539–844 is interaction with SKI and SMAD1; sequence AHVKSCFQNM…KENTPPRCAM (306 aa). The tract at residues 600-800 is interaction with DAZAP2; sequence SATLSLANPE…MRQQPTSTTS (201 aa). Phosphoserine is present on residues Ser-634 and Ser-668. The residue at position 687 (Thr-687) is a Phosphothreonine. The interval 752 to 897 is interaction with POU4F1; sequence RNTHAHGSHY…ITISSDTDEE (146 aa). The interval 774 to 876 is interaction with CTBP1; that stretch reads HVTLPAAQPL…TRERQRQTIV (103 aa). The interval 787 to 897 is interaction with HMGA1; it reads VAHVMRQQPT…ITISSDTDEE (111 aa). 2 disordered regions span residues 792 to 847 and 891 to 963; these read RQQP…MVHS and SSDT…CTGN. Polar residues predominate over residues 793–829; it reads QQPTSTTSSRKSKQHQSSVRNVSTCEVTSSQAISSPQ. Residues 802–805 carry the Nuclear localization signal 1 (NLS1) motif; sequence RKSK. 2 positions are modified to phosphoserine: Ser-815 and Ser-827. The Nuclear localization signal 2 (NLS2) motif lies at 832 to 835; it reads KRVK. The tract at residues 839-934 is interaction with TP53 and TP73; it reads PPRCAMVHSS…PYSDSSSNTS (96 aa). The interval 873-907 is interaction with UBE2I; the sequence is QTIVIPDTPSPTVSVITISSDTDEEEEQKHAPTST. The tract at residues 873–980 is localization to nuclear speckles; it reads QTIVIPDTPS…PLKTQASEVL (108 aa). The interval 873-980 is required for localization to nuclear speckles; it reads QTIVIPDTPS…PLKTQASEVL (108 aa). The segment at 884–908 is SUMO interaction motifs (SIM); required for nuclear localization and kinase activity; sequence TVSVITISSDTDEEEEQKHAPTSTV. Positions 923-937 are enriched in low complexity; the sequence is DSPYSDSSSNTSPYS. Ser-934 is subject to Phosphoserine. Residues 935 to 1050 form an interaction with AXIN1 region; the sequence is PYSVQQRTGH…LSQAQQHMAA (116 aa). Over residues 938 to 951 the composition is skewed to polar residues; the sequence is VQQRTGHNGTNTLD. Glycyl lysine isopeptide (Lys-Gly) (interchain with G-Cter in SUMO2) cross-links involve residues Lys-953 and Lys-973. Residues 984–1196 form an autoinhibitory domain (AID) region; sequence DSLGPAISAS…PAKVNQYPYI (213 aa). Ser-991, Ser-993, Ser-1042, Ser-1153, and Ser-1186 each carry phosphoserine. Residues 991–1046 show a composition bias toward low complexity; sequence SASHHSSSFKSKSSSTVTSTSGHSSGSSSGAIAYRQQRPGPHFQQQQPLNLSQAQQ. The tract at residues 991 to 1058 is disordered; sequence SASHHSSSFK…AADRTGSHRR (68 aa). Lys-1189 is covalently cross-linked (Glycyl lysine isopeptide (Lys-Gly) (interchain with G-Cter in SUMO)).

It belongs to the protein kinase superfamily. CMGC Ser/Thr protein kinase family. HIPK subfamily. Interacts with CREB1, SIAH1, WSB1, CBX4, TRADD, p53/TP53, TP73, TP63, CREBBP, DAXX, P53DINP1, SKI, SMAD1, SMAD2 and SMAD3, but not SMAD4. Interacts with SP100; positively regulates TP53-dependent transcription. Interacts with ATF1, PML, RUNX1, EP300, NKX1-2, NKX2-5, UBE2I, HMGA1, CTBP1, AXIN1, NLK, MYB, POU4F1, POU4F2, POU4F3, UBE2I, UBL1 and ZBTB4. Probably part of a complex consisting of p53/TP53, HIPK2 and AXIN1. Interacts with DAZAP2; the interaction results in phosphorylation of DAZAP2 which causes localization of DAZAP2 to the nucleus, reduces interaction of DAZAP2 with HIPK2 and prevents DAZAP2-dependent degradation of HIPK2. Interacts with SIAH1; the interaction is promoted by DAZAP2 and results in SIAH1-mediated ubiquitination and subsequent proteasomal degradation of HIPK2. As to quaternary structure, interacts with SPN/CD43 cytoplasmic tail. Post-translationally, sumoylated. When conjugated it is directed to nuclear speckles. Desumoylated by SENP1. Sumoylation on Lys-32 is promoted by the E3 SUMO-protein ligase CBX4. In terms of processing, autophosphorylation at Tyr-361 in the activation loop activates the kinase and promotes nuclear localization. Ubiquitinated by FBXO3, WSB1 and SIAH1, leading to rapid proteasome-dependent degradation. The degradation mediated by FBXO3, but not ubiquitination, is prevented in the presence of PML. The degradation mediated by WSB1 and SIAH1 is reversibly reduced upon DNA damage. Post-translationally, cleaved at Asp-923 and Asp-984 by CASP6 in a p53/TP53-dependent manner. The cleaved form lacks the autoinhibitory C-terminal domain (AID), resulting in a hyperactive kinase, which potentiates p53/TP53 Ser-46 phosphorylation and subsequent activation of the cell death machinery. In terms of tissue distribution, ubiquitous. Abundant in muscle, heart, small intestine, stomach, kidney and brain; and low in testis, skin and lung.

The protein resides in the nucleus. Its subcellular location is the PML body. It is found in the cytoplasm. It carries out the reaction L-seryl-[protein] + ATP = O-phospho-L-seryl-[protein] + ADP + H(+). The enzyme catalyses L-threonyl-[protein] + ATP = O-phospho-L-threonyl-[protein] + ADP + H(+). Serine/threonine-protein kinase involved in transcription regulation, p53/TP53-mediated cellular apoptosis and regulation of the cell cycle. Acts as a corepressor of several transcription factors, including SMAD1 and POU4F1/Brn3a and probably NK homeodomain transcription factors. Phosphorylates PDX1, ATF1, PML, p53/TP53, CREB1, CTBP1, CBX4, RUNX1, EP300, CTNNB1, HMGA1, ZBTB4 and DAZAP2. Inhibits cell growth and promotes apoptosis through the activation of p53/TP53 both at the transcription level and at the protein level (by phosphorylation and indirect acetylation). The phosphorylation of p53/TP53 may be mediated by a p53/TP53-HIPK2-AXIN1 complex. Involved in the response to hypoxia by acting as a transcriptional co-suppressor of HIF1A. Mediates transcriptional activation of TP73. In response to TGFB, cooperates with DAXX to activate JNK. Negative regulator through phosphorylation and subsequent proteasomal degradation of CTNNB1 and the antiapoptotic factor CTBP1. In the Wnt/beta-catenin signaling pathway acts as an intermediate kinase between MAP3K7/TAK1 and NLK to promote the proteasomal degradation of MYB. Phosphorylates CBX4 upon DNA damage and promotes its E3 SUMO-protein ligase activity. Activates CREB1 and ATF1 transcription factors by phosphorylation in response to genotoxic stress. In response to DNA damage, stabilizes PML by phosphorylation. PML, HIPK2 and FBXO3 may act synergically to activate p53/TP53-dependent transactivation. Promotes angiogenesis, and is involved in erythroid differentiation, especially during fetal liver erythropoiesis. Phosphorylation of RUNX1 and EP300 stimulates EP300 transcription regulation activity. Triggers ZBTB4 protein degradation in response to DNA damage. In response to DNA damage, phosphorylates DAZAP2 which localizes DAZAP2 to the nucleus, reduces interaction of DAZAP2 with HIPK2 and prevents DAZAP2-dependent ubiquitination of HIPK2 by E3 ubiquitin-protein ligase SIAH1 and subsequent proteasomal degradation. Modulates HMGA1 DNA-binding affinity. In response to high glucose, triggers phosphorylation-mediated subnuclear localization shifting of PDX1. Involved in the regulation of eye size, lens formation and retinal lamination during late embryogenesis. The chain is Homeodomain-interacting protein kinase 2 (Hipk2) from Mus musculus (Mouse).